A 269-amino-acid chain; its full sequence is Ribonuclease HII (269 aa).

The RNase H type-2 domain occupies Y83–L269. Residues D89, E90, and D185 each coordinate a divalent metal cation.

This sequence belongs to the RNase HII family. Mn(2+) is required as a cofactor. It depends on Mg(2+) as a cofactor.

The protein resides in the cytoplasm. The enzyme catalyses Endonucleolytic cleavage to 5'-phosphomonoester.. In terms of biological role, endonuclease that specifically degrades the RNA of RNA-DNA hybrids. The protein is Ribonuclease HII of Clostridium botulinum (strain Hall / ATCC 3502 / NCTC 13319 / Type A).